The chain runs to 353 residues: Photosystem II protein D1 (353 aa).

T2 carries the post-translational modification N-acetylthreonine. T2 is subject to Phosphothreonine. The next 3 membrane-spanning stretches (helical) occupy residues 29 to 46 (YIGW…TATS), 118 to 133 (HFLL…EWEL), and 142 to 156 (WIAV…AATA). Residue H118 coordinates chlorophyll a. A pheophytin a-binding site is contributed by Y126. Residues D170 and E189 each coordinate [CaMn4O5] cluster. A helical membrane pass occupies residues 197 to 218 (FHMLGVAGVFGGSLFSAMHGSL). A chlorophyll a-binding site is contributed by H198. A quinone is bound by residues H215 and 264 to 265 (SF). H215 contributes to the Fe cation binding site. H272 lines the Fe cation pocket. A helical transmembrane segment spans residues 274–288 (FLAAWPVVGIWFTAL). Residues H332, E333, D342, and A344 each coordinate [CaMn4O5] cluster. The propeptide occupies 345–353 (AIEAPSTNG).

The protein belongs to the reaction center PufL/M/PsbA/D family. In terms of assembly, PSII is composed of 1 copy each of membrane proteins PsbA, PsbB, PsbC, PsbD, PsbE, PsbF, PsbH, PsbI, PsbJ, PsbK, PsbL, PsbM, PsbT, PsbX, PsbY, PsbZ, Psb30/Ycf12, at least 3 peripheral proteins of the oxygen-evolving complex and a large number of cofactors. It forms dimeric complexes. The cofactor is The D1/D2 heterodimer binds P680, chlorophylls that are the primary electron donor of PSII, and subsequent electron acceptors. It shares a non-heme iron and each subunit binds pheophytin, quinone, additional chlorophylls, carotenoids and lipids. D1 provides most of the ligands for the Mn4-Ca-O5 cluster of the oxygen-evolving complex (OEC). There is also a Cl(-1) ion associated with D1 and D2, which is required for oxygen evolution. The PSII complex binds additional chlorophylls, carotenoids and specific lipids.. Post-translationally, tyr-161 forms a radical intermediate that is referred to as redox-active TyrZ, YZ or Y-Z. C-terminally processed by CTPA; processing is essential to allow assembly of the oxygen-evolving complex and thus photosynthetic growth.

The protein localises to the plastid. It is found in the chloroplast thylakoid membrane. It carries out the reaction 2 a plastoquinone + 4 hnu + 2 H2O = 2 a plastoquinol + O2. Photosystem II (PSII) is a light-driven water:plastoquinone oxidoreductase that uses light energy to abstract electrons from H(2)O, generating O(2) and a proton gradient subsequently used for ATP formation. It consists of a core antenna complex that captures photons, and an electron transfer chain that converts photonic excitation into a charge separation. The D1/D2 (PsbA/PsbD) reaction center heterodimer binds P680, the primary electron donor of PSII as well as several subsequent electron acceptors. The chain is Photosystem II protein D1 from Citrus sinensis (Sweet orange).